The chain runs to 925 residues: Protein translocase subunit SecA (925 aa).

Residues Gln-87, 105-109, and Asp-512 each bind ATP; that span reads GEGKT. Zn(2+)-binding residues include Cys-910, Cys-912, Cys-921, and His-922.

Belongs to the SecA family. As to quaternary structure, monomer and homodimer. Part of the essential Sec protein translocation apparatus which comprises SecA, SecYEG and auxiliary proteins SecDF-YajC and YidC. Requires Zn(2+) as cofactor.

The protein resides in the cell inner membrane. The protein localises to the cytoplasm. The enzyme catalyses ATP + H2O + cellular proteinSide 1 = ADP + phosphate + cellular proteinSide 2.. Its function is as follows. Part of the Sec protein translocase complex. Interacts with the SecYEG preprotein conducting channel. Has a central role in coupling the hydrolysis of ATP to the transfer of proteins into and across the cell membrane, serving both as a receptor for the preprotein-SecB complex and as an ATP-driven molecular motor driving the stepwise translocation of polypeptide chains across the membrane. This is Protein translocase subunit SecA from Psychrobacter sp. (strain PRwf-1).